A 138-amino-acid polypeptide reads, in one-letter code: Basic phospholipase A2 BP-I (138 aa).

A signal peptide spans 1 to 16 (MRTLWIMAVLLLGVDG). 7 disulfide bridges follow: cysteine 42-cysteine 132, cysteine 44-cysteine 60, cysteine 59-cysteine 112, cysteine 65-cysteine 138, cysteine 66-cysteine 105, cysteine 73-cysteine 98, and cysteine 91-cysteine 103. Ca(2+)-binding residues include glycine 45 and glycine 47. The active site involves histidine 63. Residue aspartate 106 is part of the active site.

Belongs to the phospholipase A2 family. Group II subfamily. K49 sub-subfamily. Ca(2+) is required as a cofactor. Expressed by the venom gland.

It localises to the secreted. The catalysed reaction is a 1,2-diacyl-sn-glycero-3-phosphocholine + H2O = a 1-acyl-sn-glycero-3-phosphocholine + a fatty acid + H(+). Its function is as follows. Snake venom phospholipase A2 (PLA2) that has strong myotoxic activity with a low phospholipase A2 activity. PLA2 catalyzes the calcium-dependent hydrolysis of the 2-acyl groups in 3-sn-phosphoglycerides. The protein is Basic phospholipase A2 BP-I of Protobothrops flavoviridis (Habu).